A 494-amino-acid chain; its full sequence is Sugar phosphate exchanger 3 (494 aa).

A helical transmembrane segment spans residues 10 to 30; it reads GALLTSFSHHHLAVFLLTFFS. A glycan (N-linked (GlcNAc...) asparagine) is linked at Asn58. 5 helical membrane-spanning segments follow: residues 81 to 101, 113 to 133, 146 to 166, 177 to 197, and 209 to 229; these read TLFLGTLDTVFLFSYAVGLFI, WVLSFGMCSSAFVVFVFGTLT, GLWIVNGLLQSTGWPCVVAVM, VVFGLWSACASVGNILGAFLA, and FLVTASVQFAGGIIIFFGLLV. The interval 240–261 is disordered; sequence GAEESSEEDSQRPLIDGAENED. 6 consecutive transmembrane segments (helical) span residues 297-317, 333-353, 357-377, 386-406, 428-448, and 457-477; these read LAYACLKLVNYSFFFWLPFYL, IWYDVGGIIGGTLLGFISDVL, APVLALSLFLAVWSLVGYSRS, LLMTITGFFIGGPSNMVSSAI, GIVDGTGSIGAAVGQYLVSLI, and VFYFFILMTSCTILFILPLIV.

This sequence belongs to the major facilitator superfamily. Organophosphate:Pi antiporter (OPA) (TC 2.A.1.4) family. In terms of assembly, interacts with ATRAID; the interaction is direct and both proteins are mutually dependent for their stability. Glycosylated.

It localises to the endoplasmic reticulum membrane. The protein localises to the lysosome membrane. Its function is as follows. Unlike the other SLC37 members, lacks glucose-6-phosphate antiporter activity. In osteoclasts, forms a transporter complex with ATRAID for nitrogen-containing-bisphophonates (N-BPs) required for releasing N-BP molecules that have trafficked to lysosomes through fluid-phase endocytosis into the cytosol. The chain is Sugar phosphate exchanger 3 (Slc37a3) from Mus musculus (Mouse).